A 226-amino-acid chain; its full sequence is MVDKTSVAAEIAEPERRKVFRKVFRQLGAATVITMFGKAVLDSRPARAASVLRPPGALPEPEFNAACIRCGLCVEACPLDILHLASWSDPAPTGTPYFVGRTDPCRMCPDIPCARACPTGALSPLLTDIKKADMGVAVLVGHETCLNYKGLTCSICVRVCPIIGEAISLKQIKNERGVLQIPTVDSSKCTGCGTCEKHCVLSEAAIRLLPRELGLGVEGAQSVGRW.

4Fe-4S ferredoxin-type domains are found at residues 59-87 (PEPE…LASW), 95-127 (TPYF…PLLT), 136-172 (VAVL…LKQI), and 180-211 (QIPT…LLPR). [4Fe-4S] cluster is bound by residues C67, C70, C73, C77, C105, C108, C113, C117, C145, C153, C156, C160, C189, C192, C195, and C199.

Its pathway is one-carbon metabolism; methylamine degradation. Functionally, involved in electron transfer. This Methylophilus methylotrophus (Bacterium W3A1) protein is Methylamine utilization ferredoxin-type protein MauM (mauM).